Here is a 261-residue protein sequence, read N- to C-terminus: uncharacterized protein (261 aa).

Positions 20-34 (TMSTPFLESDNSNTQ) are enriched in polar residues. Residues 20 to 55 (TMSTPFLESDNSNTQSISGRIGSNNNSNSKNSGGIG) are disordered. Residues 35–51 (SISGRIGSNNNSNSKNS) show a composition bias toward low complexity. A run of 3 helical transmembrane segments spans residues 113–133 (LFSGLFGGGFILTFILCILLL), 183–200 (LIFWITLYGTPIFWILFF), and 204–226 (IISLQFAWILIPIIALSLNMANV).

The protein belongs to the TVP23 family.

The protein resides in the membrane. This is an uncharacterized protein from Dictyostelium discoideum (Social amoeba).